Here is a 120-residue protein sequence, read N- to C-terminus: NAD(P)H-quinone oxidoreductase subunit 3, chloroplastic (120 aa).

Helical transmembrane passes span 9 to 29 (FFWA…LISG), 64 to 84 (MFAL…PWAM), and 88 to 108 (VLGV…IIGL).

This sequence belongs to the complex I subunit 3 family. In terms of assembly, NDH is composed of at least 16 different subunits, 5 of which are encoded in the nucleus.

It is found in the plastid. The protein resides in the chloroplast thylakoid membrane. The enzyme catalyses a plastoquinone + NADH + (n+1) H(+)(in) = a plastoquinol + NAD(+) + n H(+)(out). It carries out the reaction a plastoquinone + NADPH + (n+1) H(+)(in) = a plastoquinol + NADP(+) + n H(+)(out). In terms of biological role, NDH shuttles electrons from NAD(P)H:plastoquinone, via FMN and iron-sulfur (Fe-S) centers, to quinones in the photosynthetic chain and possibly in a chloroplast respiratory chain. The immediate electron acceptor for the enzyme in this species is believed to be plastoquinone. Couples the redox reaction to proton translocation, and thus conserves the redox energy in a proton gradient. The protein is NAD(P)H-quinone oxidoreductase subunit 3, chloroplastic of Nicotiana tabacum (Common tobacco).